The following is a 608-amino-acid chain: Histone-arginine methyltransferase CARM1 (608 aa).

An N-acetylalanine modification is found at A2. Residues 27 to 138 form an interaction with C9orf72 region; sequence ATVSVFPGAR…GHTLERSVFS (112 aa). The SAM-dependent MTase PRMT-type domain maps to 146–453; the sequence is AVQYFQFYGY…KRQSYDISIV (308 aa). Residues Q159, R168, G192, and E214 each coordinate S-adenosyl-L-methionine. S216 is modified (phosphoserine). K227 is covalently cross-linked (Glycyl lysine isopeptide (Lys-Gly) (interchain with G-Cter in ubiquitin)). 2 residues coordinate S-adenosyl-L-methionine: E243 and S271. The tract at residues 346-379 is required for nuclear translocation; that stretch reads RILMAKSVKYTVNFLEAKEGDLHRIEIPFKFHML. A transactivation domain region spans residues 499–608; that stretch reads TGSTYNLSSG…IPTNTMHYGS (110 aa). R550 carries the dimethylated arginine modification.

This sequence belongs to the class I-like SAM-binding methyltransferase superfamily. Protein arginine N-methyltransferase family. In terms of assembly, homodimer. Interacts with NR1H4. Interacts with SNRPC. Interacts with the C-terminus of NCOA2/GRIP1, NCO3/ACTR and NCOA1/SRC1. Part of a complex consisting of CARM1, EP300/P300 and NCOA2/GRIP1. Interacts with FLII, TP53, myogenic factor MEF2, EP300/P300, TRIM24, CREBBP and CTNNB1. Interacts with RELA. Identified in a complex containing CARM1, TRIM24 and NCOA2/GRIP1. Interacts with NCOA3/SRC3. Interacts with SKP2. Interacts (via PH domain-like fold) with C9orf72. Interacts with PARP1; promoting PARP1 recruimtent to replication forks. (Microbial infection) Interacts with HTLV-1 protein Tax. In terms of processing, auto-methylated on Arg-550. Methylation enhances transcription coactivator activity. Methylation is required for its role in the regulation of pre-mRNA alternative splicing. Phosphorylation at Ser-216 is strongly increased during mitosis, and decreases rapidly to a very low, basal level after entry into the G1 phase of the cell cycle. Phosphorylation at Ser-216 may promote location in the cytosol. Phosphorylation at Ser-216 interferes with S-adenosyl-L-methionine binding and strongly reduces methyltransferase activity. Post-translationally, ubiquitinated by E3 ubiquitin-protein ligase complex containing FBXO9 at Lys-227; leading to proteasomal degradation. As to expression, overexpressed in prostate adenocarcinomas and high-grade prostatic intraepithelial neoplasia.

The protein localises to the nucleus. Its subcellular location is the cytoplasm. It is found in the chromosome. The enzyme catalyses L-arginyl-[protein] + 2 S-adenosyl-L-methionine = N(omega),N(omega)-dimethyl-L-arginyl-[protein] + 2 S-adenosyl-L-homocysteine + 2 H(+). Its activity is regulated as follows. Methylation of H3R17 (H3R17me) by CARM1 is stimulated by preacetylation of H3 'Lys-18' (H3K18ac) H3 'Lys-23' (H3K23ac) by EP300 and blocked by citrullination of H3 'Arg-17' (H3R17ci) by PADI4. Methylates (mono- and asymmetric dimethylation) the guanidino nitrogens of arginyl residues in several proteins involved in DNA packaging, transcription regulation, pre-mRNA splicing, and mRNA stability. Recruited to promoters upon gene activation together with histone acetyltransferases from EP300/P300 and p160 families, methylates histone H3 at 'Arg-17' (H3R17me), forming mainly asymmetric dimethylarginine (H3R17me2a), leading to activation of transcription via chromatin remodeling. During nuclear hormone receptor activation and TCF7L2/TCF4 activation, acts synergically with EP300/P300 and either one of the p160 histone acetyltransferases NCOA1/SRC1, NCOA2/GRIP1 and NCOA3/ACTR or CTNNB1/beta-catenin to activate transcription. During myogenic transcriptional activation, acts together with NCOA3/ACTR as a coactivator for MEF2C. During monocyte inflammatory stimulation, acts together with EP300/P300 as a coactivator for NF-kappa-B. Acts as a coactivator for PPARG, promotes adipocyte differentiation and the accumulation of brown fat tissue. Plays a role in the regulation of pre-mRNA alternative splicing by methylation of splicing factors. Also seems to be involved in p53/TP53 transcriptional activation. Methylates EP300/P300, both at 'Arg-2142', which may loosen its interaction with NCOA2/GRIP1, and at 'Arg-580' and 'Arg-604' in the KIX domain, which impairs its interaction with CREB and inhibits CREB-dependent transcriptional activation. Also methylates arginine residues in RNA-binding proteins PABPC1, ELAVL1 and ELAV4, which may affect their mRNA-stabilizing properties and the half-life of their target mRNAs. Acts as a transcriptional coactivator of ACACA/acetyl-CoA carboxylase by enriching H3R17 methylation at its promoter, thereby positively regulating fatty acid synthesis. Independently of its methyltransferase activity, involved in replication fork progression: promotes PARP1 recruitment to replication forks, leading to poly-ADP-ribosylation of chromatin at replication forks and reduced fork speed. In Homo sapiens (Human), this protein is Histone-arginine methyltransferase CARM1 (CARM1).